Reading from the N-terminus, the 86-residue chain is Mu-theraphotoxin-Hhn1c (86 aa).

Residues Met-1–Ala-21 form the signal peptide. A propeptide spanning residues Ser-22–Arg-49 is cleaved from the precursor. Cystine bridges form between Cys-51–Cys-66, Cys-58–Cys-73, and Cys-65–Cys-80. At Ile-84 the chain carries Isoleucine amide.

This sequence belongs to the neurotoxin 10 (Hwtx-1) family. 22 (Htx-4) subfamily. Monomer. As to expression, expressed by the venom gland.

The protein resides in the secreted. Functionally, neurotoxin. Selectively blocks neuronal tetrodotoxin-sensitive voltage-gated sodium channels (Nav). Does not affect tetrodotoxin-resistant voltage-gated sodium channels or calcium channels. This Cyriopagopus hainanus (Chinese bird spider) protein is Mu-theraphotoxin-Hhn1c.